The primary structure comprises 294 residues: ATP synthase gamma chain (294 aa).

It belongs to the ATPase gamma chain family. As to quaternary structure, F-type ATPases have 2 components, CF(1) - the catalytic core - and CF(0) - the membrane proton channel. CF(1) has five subunits: alpha(3), beta(3), gamma(1), delta(1), epsilon(1). CF(0) has three main subunits: a, b and c.

It is found in the cell inner membrane. In terms of biological role, produces ATP from ADP in the presence of a proton gradient across the membrane. The gamma chain is believed to be important in regulating ATPase activity and the flow of protons through the CF(0) complex. The protein is ATP synthase gamma chain of Campylobacter jejuni (strain RM1221).